A 44-amino-acid polypeptide reads, in one-letter code: uncharacterized protein (44 aa).

A signal peptide spans 1–16 (MRISLLAVILALLFVA).

This is an uncharacterized protein from Helicobacter pylori (strain ATCC 700392 / 26695) (Campylobacter pylori).